Reading from the N-terminus, the 130-residue chain is Small ribosomal subunit protein uS11 (130 aa).

It belongs to the universal ribosomal protein uS11 family. As to quaternary structure, part of the 30S ribosomal subunit.

Its function is as follows. Located on the platform of the 30S subunit. The chain is Small ribosomal subunit protein uS11 from Thermoplasma acidophilum (strain ATCC 25905 / DSM 1728 / JCM 9062 / NBRC 15155 / AMRC-C165).